Consider the following 420-residue polypeptide: Phosphoglycerate kinase, cytosolic (420 aa).

(2R)-3-phosphoglycerate is bound by residues V23, D24, F25, N26, R39, S61, H62, G64, R65, R135, H171, and R172. Residues G217 and A218 each coordinate ADP. G217 is a CDP binding site. AMP-binding residues include A218 and K219. A218 serves as a coordination point for ATP. A218 is a Mg(2+) binding site. K219 is a binding site for (2R)-3-phosphoglycerate. Residue D222 participates in CDP binding. D222 contributes to the Mg(2+) binding site. Residues K223 and G241 each contribute to the ADP site. K223 is a binding site for AMP. K223 is a binding site for ATP. G241 contributes to the CDP binding site. AMP is bound by residues A242 and A314. ATP-binding residues include A242 and A314. The ADP site is built by A314 and N338. Residues G339 and F344 each contribute to the CDP site. 4 residues coordinate ADP: F344, E345, E377, and S378. Position 345 (E345) interacts with AMP. Residues E345, E377, and S378 each coordinate ATP. E377 is a Mg(2+) binding site.

Belongs to the phosphoglycerate kinase family. As to quaternary structure, monomer. Requires Mg(2+) as cofactor.

Its subcellular location is the cytoplasm. It carries out the reaction (2R)-3-phosphoglycerate + ATP = (2R)-3-phospho-glyceroyl phosphate + ADP. Its pathway is carbohydrate degradation; glycolysis; pyruvate from D-glyceraldehyde 3-phosphate: step 2/5. In Trypanosoma brucei brucei, this protein is Phosphoglycerate kinase, cytosolic.